A 189-amino-acid polypeptide reads, in one-letter code: Glycerol-3-phosphate acyltransferase 1 (189 aa).

The next 5 helical transmembrane spans lie at Met-12–Val-32, Gly-61–Ala-81, Phe-88–Phe-108, Ile-124–Ile-144, and Ile-164–Leu-184.

Belongs to the PlsY family. As to quaternary structure, probably interacts with PlsX.

The protein resides in the cell membrane. The catalysed reaction is an acyl phosphate + sn-glycerol 3-phosphate = a 1-acyl-sn-glycero-3-phosphate + phosphate. Its pathway is lipid metabolism; phospholipid metabolism. Functionally, catalyzes the transfer of an acyl group from acyl-phosphate (acyl-PO(4)) to glycerol-3-phosphate (G3P) to form lysophosphatidic acid (LPA). This enzyme utilizes acyl-phosphate as fatty acyl donor, but not acyl-CoA or acyl-ACP. In Bacillus anthracis, this protein is Glycerol-3-phosphate acyltransferase 1.